Reading from the N-terminus, the 195-residue chain is Imidazole glycerol phosphate synthase subunit HisH (195 aa).

The 195-residue stretch at 1–195 folds into the Glutamine amidotransferase type-1 domain; it reads MIAVVDLGIG…LRLLENFRRL (195 aa). Residue cysteine 72 is the Nucleophile of the active site. Residues histidine 177 and glutamate 179 contribute to the active site.

In terms of assembly, heterodimer of HisH and HisF.

Its subcellular location is the cytoplasm. The enzyme catalyses 5-[(5-phospho-1-deoxy-D-ribulos-1-ylimino)methylamino]-1-(5-phospho-beta-D-ribosyl)imidazole-4-carboxamide + L-glutamine = D-erythro-1-(imidazol-4-yl)glycerol 3-phosphate + 5-amino-1-(5-phospho-beta-D-ribosyl)imidazole-4-carboxamide + L-glutamate + H(+). It carries out the reaction L-glutamine + H2O = L-glutamate + NH4(+). The protein operates within amino-acid biosynthesis; L-histidine biosynthesis; L-histidine from 5-phospho-alpha-D-ribose 1-diphosphate: step 5/9. IGPS catalyzes the conversion of PRFAR and glutamine to IGP, AICAR and glutamate. The HisH subunit catalyzes the hydrolysis of glutamine to glutamate and ammonia as part of the synthesis of IGP and AICAR. The resulting ammonia molecule is channeled to the active site of HisF. The chain is Imidazole glycerol phosphate synthase subunit HisH from Thermococcus kodakarensis (strain ATCC BAA-918 / JCM 12380 / KOD1) (Pyrococcus kodakaraensis (strain KOD1)).